The following is a 264-amino-acid chain: uncharacterized protein (264 aa).

A signal peptide spans 1–16 (MKGKSALTLLLAGIFS). Cysteine 17 carries N-palmitoyl cysteine lipidation. Cysteine 17 is lipidated: S-diacylglycerol cysteine.

Its subcellular location is the cell inner membrane. This is an uncharacterized protein from Escherichia coli (strain K12).